An 863-amino-acid polypeptide reads, in one-letter code: Leucine--tRNA ligase (863 aa).

The 'HIGH' region signature appears at 40–51 (PYPSGAGLHVGH). The 'KMSKS' region motif lies at 635–639 (KMSKS). Lys638 provides a ligand contact to ATP.

It belongs to the class-I aminoacyl-tRNA synthetase family.

The protein resides in the cytoplasm. It catalyses the reaction tRNA(Leu) + L-leucine + ATP = L-leucyl-tRNA(Leu) + AMP + diphosphate. The protein is Leucine--tRNA ligase of Leptospira interrogans serogroup Icterohaemorrhagiae serovar Lai (strain 56601).